A 107-amino-acid chain; its full sequence is Putative ankyrin repeat protein RP714 (107 aa).

3 ANK repeats span residues Pro7–Val36, Asn40–Ala69, and Glu73–Ala102.

This is Putative ankyrin repeat protein RP714 from Rickettsia prowazekii (strain Madrid E).